Here is a 617-residue protein sequence, read N- to C-terminus: Protein fem-1 homolog C (617 aa).

An N-acetylmethionine modification is found at Met-1. ANK repeat units lie at residues 2–31, 40–70, 82–111, 115–144, 148–177, 181–210, and 213–242; these read DLKTAVFNAARDGKLRLLTKLLASKSKEEV, NGATPLLMAARYGHLDMVEFLLEQCSASIEV, EGAPPLWAASAAGHLKVVQSLLNHGASVNN, TNSTPLRAACFDGHLEIVKYLVEHKADLEV, HGHTCLMISCYKGHKEIAQYLLEKGADVNR, KGNTALHDCAESGSLDIMKMLLMYCAKMEK, and YGMTPLLSASVTGHTNIVDFLTHHAQTSKT. 2 TPR repeats span residues 245–279 and 338–371; these read INALELLGATFVDKKRDLLGALKYWKKAMNMRYSD and SYYIRYRGAVYADSGNFKRCINLWKYALDMQQNN. ANK repeat units follow at residues 481–523 and 527–556; these read NNFS…DVNV and DDNSPLHIAALNNHPDIMNLLIKSGAHFDA.

Belongs to the fem-1 family. Component of a CRL2 E3 ubiquitin-protein ligase complex, also named ECS (Elongin BC-CUL2/5-SOCS-box protein) complex, composed of CUL2, Elongin BC (ELOB and ELOC), RBX1 and substrate-specific adapter FEM1C.

It functions in the pathway protein modification; protein ubiquitination. In terms of biological role, substrate-recognition component of a Cul2-RING (CRL2) E3 ubiquitin-protein ligase complex of the DesCEND (destruction via C-end degrons) pathway, which recognizes a C-degron located at the extreme C terminus of target proteins, leading to their ubiquitination and degradation. The C-degron recognized by the DesCEND pathway is usually a motif of less than ten residues and can be present in full-length proteins, truncated proteins or proteolytically cleaved forms. The CRL2(FEM1C) complex specifically recognizes proteins with an arginine at the C-terminus: recognizes and binds proteins ending with -Lys/Arg-Xaa-Arg and -Lys/Arg-Xaa-Xaa-Arg C-degrons, such as SIL1 or OR51B2, leading to their ubiquitination and degradation. The CRL2(FEM1C) complex mediates ubiquitination and degradation of truncated MSRB1/SEPX1 selenoproteins produced by failed UGA/Sec decoding. This chain is Protein fem-1 homolog C, found in Bos taurus (Bovine).